The primary structure comprises 266 residues: tRNA pseudouridine synthase A (266 aa).

The Nucleophile role is filled by aspartate 56. A substrate-binding site is contributed by tyrosine 110.

Belongs to the tRNA pseudouridine synthase TruA family.

The enzyme catalyses uridine(38/39/40) in tRNA = pseudouridine(38/39/40) in tRNA. Functionally, formation of pseudouridine at positions 38, 39 and 40 in the anticodon stem and loop of transfer RNAs. This Halobacterium salinarum (strain ATCC 29341 / DSM 671 / R1) protein is tRNA pseudouridine synthase A.